The chain runs to 316 residues: GTPase Era (316 aa).

One can recognise an Era-type G domain in the interval Arg9–Glu190. Residues Gly17–Ser24 form a G1 region. Residue Gly17 to Ser24 participates in GTP binding. A G2 region spans residues Gln43–Phe47. A G3 region spans residues Asp64–Gly67. Residues Asp64–Ile68 and Asn140–Asp143 contribute to the GTP site. The interval Asn140–Asp143 is G4. The G5 stretch occupies residues Ile169–Ala171. The region spanning Val221 to Glu298 is the KH type-2 domain.

This sequence belongs to the TRAFAC class TrmE-Era-EngA-EngB-Septin-like GTPase superfamily. Era GTPase family. In terms of assembly, monomer.

It localises to the cytoplasm. Its subcellular location is the cell inner membrane. An essential GTPase that binds both GDP and GTP, with rapid nucleotide exchange. Plays a role in 16S rRNA processing and 30S ribosomal subunit biogenesis and possibly also in cell cycle regulation and energy metabolism. The chain is GTPase Era from Caulobacter vibrioides (strain ATCC 19089 / CIP 103742 / CB 15) (Caulobacter crescentus).